We begin with the raw amino-acid sequence, 372 residues long: Spermidine/putrescine import ATP-binding protein PotA (372 aa).

The 231-residue stretch at 11–241 (IELRSITKSY…PANLFVARFI (231 aa)) folds into the ABC transporter domain. 43-50 (GPSGCGKT) is a binding site for ATP.

Belongs to the ABC transporter superfamily. Spermidine/putrescine importer (TC 3.A.1.11.1) family. As to quaternary structure, the complex is composed of two ATP-binding proteins (PotA), two transmembrane proteins (PotB and PotC) and a solute-binding protein (PotD).

The protein localises to the cell inner membrane. The catalysed reaction is ATP + H2O + polyamine-[polyamine-binding protein]Side 1 = ADP + phosphate + polyamineSide 2 + [polyamine-binding protein]Side 1.. Functionally, part of the ABC transporter complex PotABCD involved in spermidine/putrescine import. Responsible for energy coupling to the transport system. The polypeptide is Spermidine/putrescine import ATP-binding protein PotA (Aggregatibacter actinomycetemcomitans (Actinobacillus actinomycetemcomitans)).